The primary structure comprises 812 residues: Phospholipase D alpha 1 (812 aa).

The region spanning 1–130 (MAQILLHGTL…LGGEEIDKWL (130 aa)) is the C2 domain. Asp190 lines the Ca(2+) pocket. Positions 330–368 (TMFTHHQKIVVVDHEMPNQGSQQRRIVSFIGGIDLCDGR) constitute a PLD phosphodiesterase 1 domain. Catalysis depends on residues His335, Lys337, and Asp342. Residue His335 participates in a 1,2-diacyl-sn-glycero-3-phosphate binding. Residues His374 and His408 each coordinate Ca(2+). A 1,2-diacyl-sn-glycero-3-phosphate contacts are provided by Gln524 and His663. The PLD phosphodiesterase 2 domain occupies 658 to 685 (FMIYVHTKMMIVDDEYIIIGSANINQRS). Catalysis depends on residues His663, Lys665, and Asp670. A Ca(2+)-binding site is contributed by Glu724.

The protein belongs to the phospholipase D family. C2-PLD subfamily. In terms of assembly, monomer. The cofactor is Ca(2+).

It carries out the reaction a 1,2-diacyl-sn-glycero-3-phosphocholine + H2O = a 1,2-diacyl-sn-glycero-3-phosphate + choline + H(+). Functionally, hydrolyzes glycerol-phospholipids at the terminal phosphodiesteric bond. Plays an important role in various cellular processes. The protein is Phospholipase D alpha 1 (PLD1) of Zea mays (Maize).